A 301-amino-acid polypeptide reads, in one-letter code: Probable alpha-L-glutamate ligase (301 aa).

Positions 104-287 (LQLLARKGVG…VAGMIINWTE (184 aa)) constitute an ATP-grasp domain. Residues Lys-141, 178–179 (EF), Asp-187, and 211–213 (RSN) contribute to the ATP site. Positions 248, 260, and 262 each coordinate Mg(2+). Residues Asp-248, Glu-260, and Asn-262 each contribute to the Mn(2+) site.

The protein belongs to the RimK family. It depends on Mg(2+) as a cofactor. Mn(2+) is required as a cofactor.

This Marinobacter nauticus (strain ATCC 700491 / DSM 11845 / VT8) (Marinobacter aquaeolei) protein is Probable alpha-L-glutamate ligase.